Here is a 97-residue protein sequence, read N- to C-terminus: Aspartyl/glutamyl-tRNA(Asn/Gln) amidotransferase subunit C (97 aa).

Low complexity predominate over residues 74–84; the sequence is TPEEATAAAPA. The interval 74 to 97 is disordered; that stretch reads TPEEATAAAPAREGTAFKVPRIIE.

The protein belongs to the GatC family. As to quaternary structure, heterotrimer of A, B and C subunits.

The catalysed reaction is L-glutamyl-tRNA(Gln) + L-glutamine + ATP + H2O = L-glutaminyl-tRNA(Gln) + L-glutamate + ADP + phosphate + H(+). It catalyses the reaction L-aspartyl-tRNA(Asn) + L-glutamine + ATP + H2O = L-asparaginyl-tRNA(Asn) + L-glutamate + ADP + phosphate + 2 H(+). Functionally, allows the formation of correctly charged Asn-tRNA(Asn) or Gln-tRNA(Gln) through the transamidation of misacylated Asp-tRNA(Asn) or Glu-tRNA(Gln) in organisms which lack either or both of asparaginyl-tRNA or glutaminyl-tRNA synthetases. The reaction takes place in the presence of glutamine and ATP through an activated phospho-Asp-tRNA(Asn) or phospho-Glu-tRNA(Gln). The polypeptide is Aspartyl/glutamyl-tRNA(Asn/Gln) amidotransferase subunit C (Anaeromyxobacter dehalogenans (strain 2CP-1 / ATCC BAA-258)).